A 183-amino-acid chain; its full sequence is Outer membrane protein H.8 (183 aa).

Positions 1-17 are cleaved as a signal peptide; it reads MKAYLALISAAVIGLAA. The N-palmitoyl cysteine moiety is linked to residue C18. Residue C18 is the site of S-diacylglycerol cysteine attachment. The segment at 27–51 is disordered; that stretch reads AEATPAGEAPASEAPAAEAAPADAA. The Plastocyanin-like domain occupies 57–183; it reads GNCAATVESN…LMNGKVTLVD (127 aa). H102, C166, H171, and M175 together coordinate Cu cation.

Cu cation serves as cofactor.

Its subcellular location is the cell outer membrane. This Neisseria gonorrhoeae protein is Outer membrane protein H.8.